We begin with the raw amino-acid sequence, 715 residues long: Fatty acid oxidation complex subunit alpha (715 aa).

An enoyl-CoA hydratase/isomerase region spans residues 1-190; the sequence is MIYQGKAITV…KVGAVDAVVA (190 aa). Asp297 is a substrate binding site. A 3-hydroxyacyl-CoA dehydrogenase region spans residues 312–715; it reads KDVKLAAVLG…MAKNGQKFFG (404 aa). NAD(+) is bound by residues Met325, Asp344, 401–403, Lys408, and Ser430; that span reads VVE. Residue His451 is the For 3-hydroxyacyl-CoA dehydrogenase activity of the active site. NAD(+) is bound at residue Asn454. 2 residues coordinate substrate: Asn501 and Tyr660.

This sequence in the N-terminal section; belongs to the enoyl-CoA hydratase/isomerase family. It in the C-terminal section; belongs to the 3-hydroxyacyl-CoA dehydrogenase family. Heterotetramer of two alpha chains (FadB) and two beta chains (FadA).

The catalysed reaction is a (3S)-3-hydroxyacyl-CoA + NAD(+) = a 3-oxoacyl-CoA + NADH + H(+). It carries out the reaction a (3S)-3-hydroxyacyl-CoA = a (2E)-enoyl-CoA + H2O. It catalyses the reaction a 4-saturated-(3S)-3-hydroxyacyl-CoA = a (3E)-enoyl-CoA + H2O. The enzyme catalyses (3S)-3-hydroxybutanoyl-CoA = (3R)-3-hydroxybutanoyl-CoA. The catalysed reaction is a (3Z)-enoyl-CoA = a 4-saturated (2E)-enoyl-CoA. It carries out the reaction a (3E)-enoyl-CoA = a 4-saturated (2E)-enoyl-CoA. Its pathway is lipid metabolism; fatty acid beta-oxidation. In terms of biological role, involved in the aerobic and anaerobic degradation of long-chain fatty acids via beta-oxidation cycle. Catalyzes the formation of 3-oxoacyl-CoA from enoyl-CoA via L-3-hydroxyacyl-CoA. It can also use D-3-hydroxyacyl-CoA and cis-3-enoyl-CoA as substrate. The sequence is that of Fatty acid oxidation complex subunit alpha from Pseudomonas aeruginosa (strain LESB58).